We begin with the raw amino-acid sequence, 332 residues long: UDP-N-acetylenolpyruvoylglucosamine reductase (332 aa).

An FAD-binding PCMH-type domain is found at 15-184; sequence IDVSAACFLE…TYVSFRLSKR (170 aa). Residue Arg160 is part of the active site. Ser232 acts as the Proton donor in catalysis. Residue Glu328 is part of the active site.

It belongs to the MurB family. It depends on FAD as a cofactor.

Its subcellular location is the cytoplasm. The enzyme catalyses UDP-N-acetyl-alpha-D-muramate + NADP(+) = UDP-N-acetyl-3-O-(1-carboxyvinyl)-alpha-D-glucosamine + NADPH + H(+). Its pathway is cell wall biogenesis; peptidoglycan biosynthesis. Functionally, cell wall formation. The protein is UDP-N-acetylenolpyruvoylglucosamine reductase of Bacteroides fragilis (strain ATCC 25285 / DSM 2151 / CCUG 4856 / JCM 11019 / LMG 10263 / NCTC 9343 / Onslow / VPI 2553 / EN-2).